A 227-amino-acid polypeptide reads, in one-letter code: Cytochrome c oxidase subunit 2 (227 aa).

At 1–14 the chain is on the mitochondrial intermembrane side; sequence MAHAAQVGLQDATS. A helical membrane pass occupies residues 15–45; the sequence is PIMEELIIFHDHALMIIFLICFLVLYALFLT. The Mitochondrial matrix portion of the chain corresponds to 46–59; it reads LTTKLTSTNISDAQ. A helical transmembrane segment spans residues 60–87; sequence EMETVWTILPAIILVLIALPSLRILYMT. Residues 88 to 227 lie on the Mitochondrial intermembrane side of the membrane; that stretch reads DEINDPSFTI…IFEMGPVFTL (140 aa). Cu cation is bound by residues His161, Cys196, Glu198, Cys200, His204, and Met207. Glu198 serves as a coordination point for Mg(2+).

It belongs to the cytochrome c oxidase subunit 2 family. In terms of assembly, component of the cytochrome c oxidase (complex IV, CIV), a multisubunit enzyme composed of 14 subunits. The complex is composed of a catalytic core of 3 subunits MT-CO1, MT-CO2 and MT-CO3, encoded in the mitochondrial DNA, and 11 supernumerary subunits COX4I, COX5A, COX5B, COX6A, COX6B, COX6C, COX7A, COX7B, COX7C, COX8 and NDUFA4, which are encoded in the nuclear genome. The complex exists as a monomer or a dimer and forms supercomplexes (SCs) in the inner mitochondrial membrane with NADH-ubiquinone oxidoreductase (complex I, CI) and ubiquinol-cytochrome c oxidoreductase (cytochrome b-c1 complex, complex III, CIII), resulting in different assemblies (supercomplex SCI(1)III(2)IV(1) and megacomplex MCI(2)III(2)IV(2)). Found in a complex with TMEM177, COA6, COX18, COX20, SCO1 and SCO2. Interacts with TMEM177 in a COX20-dependent manner. Interacts with COX20. Interacts with COX16. Requires Cu cation as cofactor.

The protein resides in the mitochondrion inner membrane. The enzyme catalyses 4 Fe(II)-[cytochrome c] + O2 + 8 H(+)(in) = 4 Fe(III)-[cytochrome c] + 2 H2O + 4 H(+)(out). Component of the cytochrome c oxidase, the last enzyme in the mitochondrial electron transport chain which drives oxidative phosphorylation. The respiratory chain contains 3 multisubunit complexes succinate dehydrogenase (complex II, CII), ubiquinol-cytochrome c oxidoreductase (cytochrome b-c1 complex, complex III, CIII) and cytochrome c oxidase (complex IV, CIV), that cooperate to transfer electrons derived from NADH and succinate to molecular oxygen, creating an electrochemical gradient over the inner membrane that drives transmembrane transport and the ATP synthase. Cytochrome c oxidase is the component of the respiratory chain that catalyzes the reduction of oxygen to water. Electrons originating from reduced cytochrome c in the intermembrane space (IMS) are transferred via the dinuclear copper A center (CU(A)) of subunit 2 and heme A of subunit 1 to the active site in subunit 1, a binuclear center (BNC) formed by heme A3 and copper B (CU(B)). The BNC reduces molecular oxygen to 2 water molecules using 4 electrons from cytochrome c in the IMS and 4 protons from the mitochondrial matrix. The chain is Cytochrome c oxidase subunit 2 (MT-CO2) from Gorilla gorilla beringei (Mountain gorilla).